Here is a 103-residue protein sequence, read N- to C-terminus: N(4)-acetylcytidine amidohydrolase (103 aa).

The region spanning 6-101 (ITFFQRFQDD…QTQFYVIEFK (96 aa)) is the ASCH domain. The active-site Proton acceptor is the Lys21. The active-site Nucleophile is Thr24. Glu74 (proton donor) is an active-site residue.

Belongs to the N(4)-acetylcytidine amidohydrolase family.

The enzyme catalyses N(4)-acetylcytidine + H2O = cytidine + acetate + H(+). The catalysed reaction is N(4)-acetyl-2'-deoxycytidine + H2O = 2'-deoxycytidine + acetate + H(+). It carries out the reaction N(4)-acetylcytosine + H2O = cytosine + acetate + H(+). Functionally, catalyzes the hydrolysis of N(4)-acetylcytidine (ac4C). The sequence is that of N(4)-acetylcytidine amidohydrolase (yqfB) from Escherichia coli O8 (strain IAI1).